A 20-amino-acid polypeptide reads, in one-letter code: Ranalexin-1Cb (20 aa).

Residues C14 and C20 are joined by a disulfide bond.

As to expression, expressed by the skin glands.

It localises to the secreted. Its function is as follows. Antibacterial activity against Gram-positive bacterium S.aureus and Gram-negative bacterium E.coli. Has activity against C.albicans. This chain is Ranalexin-1Cb, found in Lithobates clamitans (Green frog).